The primary structure comprises 243 residues: Adenylate kinase 4 (243 aa).

ATP is bound at residue 40–45; that stretch reads GSGKGT. An NMP region spans residues 60 to 89; it reads ATGDMLRAAVAAKTPLGVKAKEAMDKGELV. Residues Thr-61, Arg-66, 87–89, 115–118, and Gln-122 contribute to the AMP site; these read ELV and GFPR. The interval 156–193 is LID; the sequence is GRWIHPSSGRSYHTKFAPPKVPGVDDVTGEPLIQRKDD. Arg-157 provides a ligand contact to ATP. AMP is bound by residues Arg-190 and Arg-201.

The protein belongs to the adenylate kinase family.

It localises to the cytoplasm. It carries out the reaction AMP + ATP = 2 ADP. Catalyzes the reversible transfer of the terminal phosphate group between ATP and AMP. Plays an important role in cellular energy homeostasis and in adenine nucleotide metabolism. The chain is Adenylate kinase 4 (ADK-B) from Oryza sativa subsp. japonica (Rice).